A 415-amino-acid polypeptide reads, in one-letter code: MNEAEGLRQRRPLRPQVITEDSPAQEAKEGSAYSSKVFRVTFLTLAASLAVPLLGATVLLDCPIDPQPISLKEPPLLTGVLEPNNKLQKAERLWENQLVGPESIVNIGDVLFTGTADGKILKIEDGEVQTVARIGHGPCGTPEDEPTCGRPLGIRVGPNNTLFVADAYYGLYEVNPGTGETKMLVSTKTLIEGQKLSFLNDLTVTQDGRKIYFTDSSSKWQRRDFLFLVMEGTDDGRLLEYDTVTKEVKVLMVGLRFPNGVQLSPAEDFVLVLETAMARIRRYYVSGLMKGGADMFVENMPGLPDNIRLSSSGGYWVAMPVVRPNPGFSMLDFLSEKPWIKRMIFKLLSQETVTKLLPKRSLVVELSETGSYRRSFHDPTGLTVPYVSEAHEHNGYLYLGSFRSPFICRLNLQHV.

A disordered region spans residues 1–30 (MNEAEGLRQRRPLRPQVITEDSPAQEAKEG). The Cytoplasmic segment spans residues 1-39 (MNEAEGLRQRRPLRPQVITEDSPAQEAKEGSAYSSKVFR). A helical membrane pass occupies residues 40-60 (VTFLTLAASLAVPLLGATVLL). The Extracellular portion of the chain corresponds to 61–412 (DCPIDPQPIS…RSPFICRLNL (352 aa)). N-linked (GlcNAc...) asparagine glycosylation is present at asparagine 159.

The protein belongs to the strictosidine synthase family.

Its subcellular location is the membrane. This is Adipocyte plasma membrane-associated protein (APMAP) from Gallus gallus (Chicken).